A 374-amino-acid chain; its full sequence is Ras-related GTP-binding protein B (374 aa).

An N-acetylmethionine modification is found at methionine 1. The segment covering 1–15 (MEESDSEKKTEKENV) has biased composition (basic and acidic residues). The interval 1 to 30 (MEESDSEKKTEKENVGPKVEPPLGEPEGSL) is disordered. Serine 49 and glycine 50 together coordinate GTP. GDP-binding residues include glycine 50, serine 51, glycine 52, lysine 53, threonine 54, serine 55, threonine 69, and threonine 75. Glycine 52, lysine 53, threonine 54, serine 55, threonine 69, threonine 75, glycine 126, and histidine 188 together coordinate GTP. Residues histidine 188 and aspartate 191 each contribute to the GDP site. A Glycyl lysine isopeptide (Lys-Gly) (interchain with G-Cter in ubiquitin) cross-link involves residue lysine 203. 2 residues coordinate GDP: leucine 209 and isoleucine 225. A GTP-binding site is contributed by isoleucine 225. Residues lysine 281, lysine 291, and lysine 305 each participate in a glycyl lysine isopeptide (Lys-Gly) (interchain with G-Cter in ubiquitin) cross-link.

Belongs to the GTR/RAG GTP-binding protein family. As to quaternary structure, interacts with RRAGC and RRAGD; heterodimerization stabilizes RRAG proteins. The GTP-bound form of RRAGB (in complex with the GDP-bound form of RRAGC or RRAGD) interacts with RPTOR, thereby promoting recruitment of mTORC1 to the lysosomes. Component of the lysosomal folliculin complex (LFC), composed of FLCN, FNIP1 (or FNIP2), RagA/RRAGA or RagB/RRAGB GDP-bound, RagC/RRAGC or RagD/RRAGD GTP-bound, and Ragulator. Interacts with SH3BP4; the interaction with this negative regulator is most probably direct, preferentially occurs with the inactive GDP-bound form of RRAGB, is negatively regulated by amino acids and prevents interaction with RPTOR. Interacts with the GATOR1 complex; inactivates RRAGB. The Rag heterodimer interacts with SLC38A9; the probable amino acid sensor. Interacts with SESN1, SESN2 and SESN3.

It is found in the cytoplasm. The protein localises to the lysosome membrane. It catalyses the reaction GTP + H2O = GDP + phosphate + H(+). With respect to regulation, the activation of GTP-binding proteins is generally mediated by a guanine exchange factor (GEF), while inactivation through hydrolysis of bound GTP is catalyzed by a GTPase activating protein (GAP). The Ragulator complex functions as a GEF and promotes the active GTP-bound form. The GATOR1 complex functions as a GAP and stimulates RRAGB GTPase activity to turn it into its inactive GDP-bound form, preventing mTORC1 recruitment and activation. Guanine nucleotide-binding protein that plays a crucial role in the cellular response to amino acid availability through regulation of the mTORC1 signaling cascade. Forms heterodimeric Rag complexes with RagC/RRAGC or RagD/RRAGD and cycles between an inactive GDP-bound and an active GTP-bound form: RagB/RRAGB is in its active form when GTP-bound RagB/RRAGB forms a complex with GDP-bound RagC/RRAGC (or RagD/RRAGD) and in an inactive form when GDP-bound RagB/RRAGB heterodimerizes with GTP-bound RagC/RRAGC (or RagD/RRAGD). In its GTP-bound active form, promotes the recruitment of mTORC1 to the lysosomes and its subsequent activation by the GTPase RHEB. Involved in the RCC1/Ran-GTPase pathway. The protein is Ras-related GTP-binding protein B of Mus musculus (Mouse).